A 118-amino-acid chain; its full sequence is Holo-[acyl-carrier-protein] synthase (118 aa).

The Mg(2+) site is built by aspartate 8 and glutamate 57.

This sequence belongs to the P-Pant transferase superfamily. AcpS family. Mg(2+) is required as a cofactor.

It localises to the cytoplasm. It catalyses the reaction apo-[ACP] + CoA = holo-[ACP] + adenosine 3',5'-bisphosphate + H(+). In terms of biological role, transfers the 4'-phosphopantetheine moiety from coenzyme A to a Ser of acyl-carrier-protein. The chain is Holo-[acyl-carrier-protein] synthase from Pediococcus pentosaceus (strain ATCC 25745 / CCUG 21536 / LMG 10740 / 183-1w).